We begin with the raw amino-acid sequence, 393 residues long: UDP-galactose translocator (393 aa).

The next 10 helical transmembrane spans lie at alanine 3–leucine 23, tyrosine 37–alanine 57, phenylalanine 65–leucine 85, leucine 97–valine 117, threonine 140–leucine 160, tryptophan 169–glycine 189, glycine 200–phenylalanine 220, leucine 238–valine 258, proline 269–valine 289, and leucine 315–valine 335. The tract at residues alanine 353–lysine 393 is disordered.

The protein belongs to the nucleotide-sugar transporter family. SLC35A subfamily. As to quaternary structure, interacts with SLC35A3; the interaction is reduced in the presence of SLC35A4. Found in a complex with SLC35A3 and SLC35A4.

Its subcellular location is the golgi apparatus membrane. It catalyses the reaction UMP(out) + UDP-alpha-D-galactose(in) = UMP(in) + UDP-alpha-D-galactose(out). The catalysed reaction is UDP-N-acetyl-alpha-D-galactosamine(in) + UMP(out) = UDP-N-acetyl-alpha-D-galactosamine(out) + UMP(in). It carries out the reaction UMP(out) + UDP-alpha-D-glucose(in) = UMP(in) + UDP-alpha-D-glucose(out). The enzyme catalyses UMP(out) + UDP-N-acetyl-alpha-D-glucosamine(in) = UMP(in) + UDP-N-acetyl-alpha-D-glucosamine(out). It catalyses the reaction UDP-alpha-D-galactose(in) + AMP(out) = UDP-alpha-D-galactose(out) + AMP(in). The catalysed reaction is UDP-alpha-D-galactose(in) + CMP(out) = UDP-alpha-D-galactose(out) + CMP(in). It carries out the reaction UDP-N-acetyl-alpha-D-galactosamine(out) + UDP-alpha-D-galactose(in) = UDP-N-acetyl-alpha-D-galactosamine(in) + UDP-alpha-D-galactose(out). The enzyme catalyses UDP-N-acetyl-alpha-D-glucosamine(out) + UDP-alpha-D-galactose(in) = UDP-N-acetyl-alpha-D-glucosamine(in) + UDP-alpha-D-galactose(out). It catalyses the reaction UDP-alpha-D-galactose(in) + UDP-alpha-D-glucose(out) = UDP-alpha-D-galactose(out) + UDP-alpha-D-glucose(in). The catalysed reaction is UMP(out) + CMP(in) = UMP(in) + CMP(out). It carries out the reaction UMP(out) + AMP(in) = UMP(in) + AMP(out). Its function is as follows. Transports uridine diphosphate galactose (UDP-galactose) from the cytosol into the Golgi apparatus, functioning as an antiporter that exchanges UDP-galactose for UMP. It is also able to exchange UDP-galactose for AMP and CMP, and to transport UDP-N-acetylgalactosamine (UDP-GalNAc) and other nucleotide sugars. As a provider of UDP-galactose to galactosyltransferases present in the Golgi apparatus, it is necessary for globotriaosylceramide/globoside (Gb3Cer) synthesis from lactosylceramide. The polypeptide is UDP-galactose translocator (Bos taurus (Bovine)).